A 338-amino-acid chain; its full sequence is Putative clathrin assembly protein At5g10410 (338 aa).

The ENTH domain occupies 27–157 (FGSTAVKYIH…WVPKVLGSFP (131 aa)).

Its subcellular location is the membrane. The protein resides in the clathrin-coated pit. It localises to the golgi apparatus. The protein localises to the cytoplasmic vesicle. It is found in the clathrin-coated vesicle. The protein is Putative clathrin assembly protein At5g10410 of Arabidopsis thaliana (Mouse-ear cress).